The primary structure comprises 312 residues: Flavonol 3-sulfotransferase (312 aa).

3'-phosphoadenylyl sulfate is bound at residue 59–64 (KSGTTW). His-119 acts as the Proton acceptor in catalysis. 3'-phosphoadenylyl sulfate-binding positions include Arg-141, Ser-149, Tyr-207, and 277–279 (RKG).

It belongs to the sulfotransferase 1 family. As to expression, highest in shoot tips and lowest in mature leaves and roots.

It localises to the cytoplasm. Functionally, sulfotransferase that utilizes 3'-phospho-5'-adenylyl sulfate (PAPS) as sulfonate donor to catalyze the sulfate conjugation of quercetin, rhamnetin and isorhamnetin but not kaempferol. O-sulfation of position 3 of flavonol. May play a role in auxin transport. The chain is Flavonol 3-sulfotransferase from Flaveria bidentis (Coastal plain yellowtops).